We begin with the raw amino-acid sequence, 211 residues long: Guanylate kinase (211 aa).

In terms of domain architecture, Guanylate kinase-like spans 7–185 (GLLIVVTGPS…AVAELRAIIM (179 aa)). 14-21 (GPSAVGKG) is a binding site for ATP.

Belongs to the guanylate kinase family.

It localises to the cytoplasm. It catalyses the reaction GMP + ATP = GDP + ADP. Essential for recycling GMP and indirectly, cGMP. In Symbiobacterium thermophilum (strain DSM 24528 / JCM 14929 / IAM 14863 / T), this protein is Guanylate kinase.